Consider the following 271-residue polypeptide: Chitinase 6 (271 aa).

Positions 1-20 are cleaved as a signal peptide; it reads MARRLSLLAVVLAMVAAVSA. The Chitin-binding type-1 domain maps to 25–60; sequence AQSCGCASDQCCSKWGFCGTGSDYCGTGCQAGPCDV. Disulfide bonds link cysteine 28-cysteine 36, cysteine 30-cysteine 42, cysteine 35-cysteine 49, cysteine 88-cysteine 137, cysteine 150-cysteine 159, and cysteine 239-cysteine 271. Glutamate 132 serves as the catalytic Proton donor. The N-linked (GlcNAc...) asparagine glycan is linked to asparagine 268.

It belongs to the glycosyl hydrolase 19 family. Chitinase class IV subfamily. Expressed in roots, leaves, sheaths and meristems.

It carries out the reaction Random endo-hydrolysis of N-acetyl-beta-D-glucosaminide (1-&gt;4)-beta-linkages in chitin and chitodextrins.. Functionally, may function in reproductive organs during embryogenesis and seed maturation. The protein is Chitinase 6 (Cht6) of Oryza sativa subsp. japonica (Rice).